An 86-amino-acid chain; its full sequence is Serine protease inhibitor Kazal-type 2 (86 aa).

Residues 1-16 (MLRLVLLLLATDFAAS) form the signal peptide. The region spanning 32 to 86 (QFRTPDCHRFDYPVCSKHLSPVCGTDMNTYGNECTLCMKIREDGSHINIIKDEPC) is the Kazal-like domain. Cystine bridges form between Cys-38/Cys-68, Cys-46/Cys-65, and Cys-54/Cys-86.

It is found in the secreted. Its subcellular location is the cytoplasmic vesicle. It localises to the secretory vesicle. The protein localises to the acrosome. As a strong inhibitor of acrosin, it is required for normal spermiogenesis. It probably hinders premature activation of proacrosin and other proteases, thus preventing the cascade of events leading to spermiogenesis defects. May be involved in the regulation of serine protease-dependent germ cell apoptosis. It also inhibits trypsin. The chain is Serine protease inhibitor Kazal-type 2 (Spink2) from Rattus norvegicus (Rat).